Here is a 485-residue protein sequence, read N- to C-terminus: Cys-Gly metallodipeptidase DUG1 (485 aa).

Histidine 109 contributes to the Zn(2+) binding site. The active site involves aspartate 111. Residue aspartate 144 participates in Zn(2+) binding. Residue glutamate 178 is the Proton acceptor of the active site. Residues glutamate 179, aspartate 207, and histidine 457 each coordinate Zn(2+).

It belongs to the peptidase M20A family. As to quaternary structure, homodimer. Component of the GSH degradosomal complex. Requires Zn(2+) as cofactor. Mn(2+) is required as a cofactor.

It is found in the cytoplasm. Functionally, catalytic component of the GSH degradosomal complex involved in the degradation of glutathione (GSH) and other peptides containing a gamma-glu-X bond. Also functions as a dipeptidase with high specificity for Cys-Gly and no activity toward tri- or tetrapeptides. This is Cys-Gly metallodipeptidase DUG1 (DUG1) from Candida albicans (strain SC5314 / ATCC MYA-2876) (Yeast).